The primary structure comprises 84 residues: Small ribosomal subunit protein uS17 (84 aa).

It belongs to the universal ribosomal protein uS17 family. As to quaternary structure, part of the 30S ribosomal subunit.

Functionally, one of the primary rRNA binding proteins, it binds specifically to the 5'-end of 16S ribosomal RNA. The polypeptide is Small ribosomal subunit protein uS17 (Borrelia duttonii (strain Ly)).